A 295-amino-acid chain; its full sequence is Acetylglutamate kinase (295 aa).

Residues 70–71, arginine 92, and asparagine 191 contribute to the substrate site; that span reads GG.

This sequence belongs to the acetylglutamate kinase family. ArgB subfamily.

The protein resides in the cytoplasm. The enzyme catalyses N-acetyl-L-glutamate + ATP = N-acetyl-L-glutamyl 5-phosphate + ADP. The protein operates within amino-acid biosynthesis; L-arginine biosynthesis; N(2)-acetyl-L-ornithine from L-glutamate: step 2/4. Functionally, catalyzes the ATP-dependent phosphorylation of N-acetyl-L-glutamate. This chain is Acetylglutamate kinase, found in Mycolicibacterium paratuberculosis (strain ATCC BAA-968 / K-10) (Mycobacterium paratuberculosis).